Reading from the N-terminus, the 297-residue chain is Coiled-coil domain-containing protein 159 (297 aa).

A coiled-coil region spans residues Glu-147 to Ala-297. The tract at residues Leu-256–Ala-297 is disordered.

As to quaternary structure, interacts with DYNLT2. Interacts with GGNBP1. Interacts with OSBP2.

Functionally, functions during spermatid development; may participate in the centrosome reduction procedure of spermatids and is required for the formation of the connecting piece/sperm head-tail coupling apparatus (HTCA) and the correct and tight attachment of the flagellum to the nuclear envelope. The polypeptide is Coiled-coil domain-containing protein 159 (CCDC159) (Homo sapiens (Human)).